A 202-amino-acid polypeptide reads, in one-letter code: FMN-dependent NADH:quinone oxidoreductase (202 aa).

FMN contacts are provided by residues Ser10 and Met95 to Phe98.

This sequence belongs to the azoreductase type 1 family. Homodimer. It depends on FMN as a cofactor.

The catalysed reaction is 2 a quinone + NADH + H(+) = 2 a 1,4-benzosemiquinone + NAD(+). It carries out the reaction N,N-dimethyl-1,4-phenylenediamine + anthranilate + 2 NAD(+) = 2-(4-dimethylaminophenyl)diazenylbenzoate + 2 NADH + 2 H(+). Functionally, quinone reductase that provides resistance to thiol-specific stress caused by electrophilic quinones. Also exhibits azoreductase activity. Catalyzes the reductive cleavage of the azo bond in aromatic azo compounds to the corresponding amines. The chain is FMN-dependent NADH:quinone oxidoreductase from Alkalilimnicola ehrlichii (strain ATCC BAA-1101 / DSM 17681 / MLHE-1).